The primary structure comprises 314 residues: MKALTKTDFNFPGQKSVYHGKVRDVYNINGEQLVMVATDRISAFDVVLPEGIPYKGQMLNQIAAKFLDATTDICPNWKLATPDPMVTVGVLCEGFPVEMIVRGYLCGSAWRAYKNGVREICGVKLPEGMKENQKFPEPIVTPTTKAEMGLHDEDISKEEILAQGLATPEEYAILEKYTLALFKRGTEIAAERGLILVDTKYEFGKHNGTIYLMDEIHTPDSSRYFYAEGYQERFEKGEAQKQLSKEFVREWLMENGFQGKEGQKVPEMTPAIVESISERYIELFENITGEKFVKEDTSNIAERIEKNVMAFLAK.

Belongs to the SAICAR synthetase family.

It catalyses the reaction 5-amino-1-(5-phospho-D-ribosyl)imidazole-4-carboxylate + L-aspartate + ATP = (2S)-2-[5-amino-1-(5-phospho-beta-D-ribosyl)imidazole-4-carboxamido]succinate + ADP + phosphate + 2 H(+). It functions in the pathway purine metabolism; IMP biosynthesis via de novo pathway; 5-amino-1-(5-phospho-D-ribosyl)imidazole-4-carboxamide from 5-amino-1-(5-phospho-D-ribosyl)imidazole-4-carboxylate: step 1/2. The chain is Phosphoribosylaminoimidazole-succinocarboxamide synthase from Bacteroides fragilis (strain ATCC 25285 / DSM 2151 / CCUG 4856 / JCM 11019 / LMG 10263 / NCTC 9343 / Onslow / VPI 2553 / EN-2).